We begin with the raw amino-acid sequence, 99 residues long: Large ribosomal subunit protein eL36 (99 aa).

Belongs to the eukaryotic ribosomal protein eL36 family. As to quaternary structure, component of the large ribosomal subunit. Mature ribosomes consist of a small (40S) and a large (60S) subunit. The 40S subunit contains about 32 different proteins and 1 molecule of RNA (18S). The 60S subunit contains 45 different proteins and 3 molecules of RNA (25S, 5.8S and 5S).

The protein localises to the cytoplasm. Component of the ribosome, a large ribonucleoprotein complex responsible for the synthesis of proteins in the cell. The small ribosomal subunit (SSU) binds messenger RNAs (mRNAs) and translates the encoded message by selecting cognate aminoacyl-transfer RNA (tRNA) molecules. The large subunit (LSU) contains the ribosomal catalytic site termed the peptidyl transferase center (PTC), which catalyzes the formation of peptide bonds, thereby polymerizing the amino acids delivered by tRNAs into a polypeptide chain. The nascent polypeptides leave the ribosome through a tunnel in the LSU and interact with protein factors that function in enzymatic processing, targeting, and the membrane insertion of nascent chains at the exit of the ribosomal tunnel. The protein is Large ribosomal subunit protein eL36 of Candida albicans (strain SC5314 / ATCC MYA-2876) (Yeast).